A 665-amino-acid chain; its full sequence is Target of rapamycin complex 2 subunit sin1 (665 aa).

Ser62 carries the post-translational modification Phosphoserine. 2 stretches are compositionally biased toward polar residues: residues 65–83 (IVAN…TKQV) and 100–109 (YATSDLSESS). The tract at residues 65–112 (IVANDTVSNVRKPSDTKQVNGAGGQVNHSRAEDSDYATSDLSESSDVG) is disordered. At Ser133 the chain carries Phosphoserine. The 138-residue stretch at 255–392 (TSALRALLEH…ATPAQIKENQ (138 aa)) folds into the CRIM domain. A disordered region spans residues 395–433 (YPFKSKHPTSIPEANNKTHIRHTSSTSSQSQKQAQDVKD). Residues Ser404, Ser490, Ser502, and Ser530 each carry the phosphoserine modification. The segment at 517–537 (RDKKGSTQQLPTSSPQNSVYG) is disordered. Residues 522–536 (STQQLPTSSPQNSVY) show a composition bias toward polar residues. Residues 558–659 (TYQEFLVWKR…IVSRIRALMN (102 aa)) form the SIN1-type PH domain.

Belongs to the SIN1 family. The target of rapamycin complex 2 (TORC2) is composed of at least bit61, pop3/wat1, sin1, ste20 and tor1. Interacts with the sty1 MAP kinase. In terms of processing, phosphorylated; under environmental stress. Either Ser-61 or Ser-62 and Ser-298, Ser-299 or Ser-301 are phosphorylated as well.

Its function is as follows. Component of the mechanistic target of rapamycin complex 2 (mTORC2), which regulates multiple cellular processes to control cell growth in response to environmental signals. In response to signals, TORC2 phosphorylates AGC protein kinase family members, such as gad8. TORC2 is required for cell survival under various stress conditions. TORC2 positively controls G1 cell-cycle arrest, sexual development and amino acid uptake. Positively regulates amino acid uptake through the control of expression of amino acid permeases. Within the mTORC2 complex, sin1 acts as a substrate adapter which recognizes and binds AGC protein kinase family members for phosphorylation by tor1. The sequence is that of Target of rapamycin complex 2 subunit sin1 from Schizosaccharomyces pombe (strain 972 / ATCC 24843) (Fission yeast).